Consider the following 650-residue polypeptide: Glycoprotein antigen BM86 (650 aa).

The first 19 residues, M1–A19, serve as a signal peptide directing secretion. EGF-like domains are found at residues E20–E66 and Y67–K104. Disulfide bonds link C24–C37, C32–C49, C51–C65, C71–C81, C76–C91, and C93–C103. 2 N-linked (GlcNAc...) asparagine glycosylation sites follow: N141 and N182. EGF-like domains follow at residues C205–K247, H251–I292, and C291–L335. 9 disulfides stabilise this stretch: C209-C222, C218-C231, C233-C246, C255-C269, C263-C278, C280-C291, C295-C307, C300-C316, and C318-C334. N348 and N382 each carry an N-linked (GlcNAc...) asparagine glycan. EGF-like domains are found at residues R482–I530 and E531–Y568. 6 disulfides stabilise this stretch: C486–C500, C492–C516, C518–C529, C535–C550, C543–C559, and C561–C567. A disordered region spans residues K603–A628. The GPI-anchor amidated serine moiety is linked to residue S627. Positions A628 to L650 are cleaved as a propeptide — removed in mature form.

It is found in the cell membrane. This chain is Glycoprotein antigen BM86, found in Rhipicephalus microplus (Cattle tick).